Reading from the N-terminus, the 217-residue chain is UPF0502 protein ETA_20480 (217 aa).

The interval 169-188 (GEVDESSRADGHHPDDHRGD) is disordered. Basic and acidic residues predominate over residues 173-188 (ESSRADGHHPDDHRGD).

This sequence belongs to the UPF0502 family.

This is UPF0502 protein ETA_20480 from Erwinia tasmaniensis (strain DSM 17950 / CFBP 7177 / CIP 109463 / NCPPB 4357 / Et1/99).